A 251-amino-acid chain; its full sequence is MSDIGDWFRSIPAITRYWFAATVAVPLVGKLGLISPAYLFLWPEAFLYRFQIWRPITATFYFPVGPGTGFLYLVNLYFLYHYSTRLETGAFDGRPADYLFMLLFNWICIVITGLAMDMQLLMIPLIMSVLYVWAQLNRDMIVSFWFGTRFKACYLPWVILGFNYIIGGSVINELIGNLVGHLYFFLMFRYPMDLGGRNFLSTPQFLYRWLPSRRGGVSGFGVPPASMRRAADQNGGGGRHNWGQGFRLGDQ.

The residue at position 2 (S2) is an N-acetylserine. Over 2-15 (SDIGDWFRSIPAIT) the chain is Cytoplasmic. Residues 16-31 (RYWFAATVAVPLVGKL) traverse the membrane as a helical segment. Topologically, residues 32-69 (GLISPAYLFLWPEAFLYRFQIWRPITATFYFPVGPGTG) are lumenal. A helical transmembrane segment spans residues 70-89 (FLYLVNLYFLYHYSTRLETG). Residues 90-94 (AFDGR) lie on the Cytoplasmic side of the membrane. A helical membrane pass occupies residues 95–115 (PADYLFMLLFNWICIVITGLA). Over 116–122 (MDMQLLM) the chain is Lumenal. A helical membrane pass occupies residues 123 to 137 (IPLIMSVLYVWAQLN). Residues 138–154 (RDMIVSFWFGTRFKACY) are Cytoplasmic-facing. A helical membrane pass occupies residues 155 to 166 (LPWVILGFNYII). Residues 167 to 170 (GGSV) are Lumenal-facing. The chain crosses the membrane as a helical span at residues 171–189 (INELIGNLVGHLYFFLMFR). Topologically, residues 190-251 (YPMDLGGRNF…WGQGFRLGDQ (62 aa)) are cytoplasmic. Position 201 is a phosphoserine (S201). T202 is subject to Phosphothreonine. Phosphoserine is present on S226. The interval 229-251 (RAADQNGGGGRHNWGQGFRLGDQ) is disordered. An SHP-box motif is present at residues 241–248 (NWGQGFRL).

The protein belongs to the derlin family. Homotetramer. The four subunits of the tetramer are arranged in a twofold symmetry. Forms homo- and heterooligomers with DERL2 and DERL3; binding to DERL3 is poorer than that between DERL2 and DERL3. Interacts (via SHP-box motif) with VCP. Interacts with AMFR, SELENOS, SEL1L, SELENOK and SYVN1, as well as with SEL1L-SYVN1 and VCP-SELENOS protein complexes; this interaction is weaker than that observed between DERL2 and these complexes. Interacts with NGLY1 and YOD1. Does not bind to EDEM1. Interacts with DNAJB9. Interacts with RNF103. Interacts with HM13. Interacts with XBP1 isoform 1 (via luminal/ectodomain domain); the interaction obviates the need for ectodomain shedding prior HM13/SPP-mediated XBP1 isoform 1 cleavage. Interacts with the signal recognition particle/SRP and the SRP receptor; in the process of endoplasmic reticulum stress-induced pre-emptive quality control. May interact with UBXN6. Interacts with ZFAND2B; probably through VCP. Interacts with CCDC47. Interacts with C18orf32. May interact with TRAM1. Forms a complex with SVIP and VCP/p97.

It is found in the endoplasmic reticulum membrane. Functionally, functional component of endoplasmic reticulum-associated degradation (ERAD) for misfolded lumenal proteins. Forms homotetramers which encircle a large channel traversing the endoplasmic reticulum (ER) membrane. This allows the retrotranslocation of misfolded proteins from the ER into the cytosol where they are ubiquitinated and degraded by the proteasome. The channel has a lateral gate within the membrane which provides direct access to membrane proteins with no need to reenter the ER lumen first. May mediate the interaction between VCP and the misfolded protein. Also involved in endoplasmic reticulum stress-induced pre-emptive quality control, a mechanism that selectively attenuates the translocation of newly synthesized proteins into the endoplasmic reticulum and reroutes them to the cytosol for proteasomal degradation. By controlling the steady-state expression of the IGF1R receptor, indirectly regulates the insulin-like growth factor receptor signaling pathway. This Pongo abelii (Sumatran orangutan) protein is Derlin-1.